Here is a 393-residue protein sequence, read N- to C-terminus: 4-hydroxyphenylpyruvate dioxygenase (393 aa).

Threonine 2 carries the N-acetylthreonine modification. VOC domains are found at residues 18 to 149 (HFHS…LVEK) and 180 to 338 (IIDH…IFTK). Lysine 132 carries the post-translational modification N6-succinyllysine. A Fe cation-binding site is contributed by histidine 183. Residues serine 211, serine 226, and serine 250 each carry the phosphoserine modification. 2 residues coordinate Fe cation: histidine 266 and glutamate 349.

The protein belongs to the 4HPPD family. Homodimer. Requires Fe cation as cofactor.

The protein localises to the cytoplasm. Its subcellular location is the endoplasmic reticulum membrane. The protein resides in the golgi apparatus membrane. The catalysed reaction is 3-(4-hydroxyphenyl)pyruvate + O2 = homogentisate + CO2. It functions in the pathway amino-acid degradation; L-phenylalanine degradation; acetoacetate and fumarate from L-phenylalanine: step 3/6. In terms of biological role, catalyzes the conversion of 4-hydroxyphenylpyruvic acid to homogentisic acid, one of the steps in tyrosine catabolism. The sequence is that of 4-hydroxyphenylpyruvate dioxygenase (HPD) from Bos taurus (Bovine).